Here is a 153-residue protein sequence, read N- to C-terminus: 6,7-dimethyl-8-ribityllumazine synthase (153 aa).

5-amino-6-(D-ribitylamino)uracil contacts are provided by residues F22, A56–E58, and A80–I82. S85–T86 provides a ligand contact to (2S)-2-hydroxy-3-oxobutyl phosphate. H88 (proton donor) is an active-site residue. 5-amino-6-(D-ribitylamino)uracil is bound at residue F113. Position 127 (R127) interacts with (2S)-2-hydroxy-3-oxobutyl phosphate.

The protein belongs to the DMRL synthase family.

It catalyses the reaction (2S)-2-hydroxy-3-oxobutyl phosphate + 5-amino-6-(D-ribitylamino)uracil = 6,7-dimethyl-8-(1-D-ribityl)lumazine + phosphate + 2 H2O + H(+). It participates in cofactor biosynthesis; riboflavin biosynthesis; riboflavin from 2-hydroxy-3-oxobutyl phosphate and 5-amino-6-(D-ribitylamino)uracil: step 1/2. Functionally, catalyzes the formation of 6,7-dimethyl-8-ribityllumazine by condensation of 5-amino-6-(D-ribitylamino)uracil with 3,4-dihydroxy-2-butanone 4-phosphate. This is the penultimate step in the biosynthesis of riboflavin. This chain is 6,7-dimethyl-8-ribityllumazine synthase, found in Fusobacterium nucleatum subsp. nucleatum (strain ATCC 25586 / DSM 15643 / BCRC 10681 / CIP 101130 / JCM 8532 / KCTC 2640 / LMG 13131 / VPI 4355).